The following is a 287-amino-acid chain: Vesicle-associated protein 4-3 (287 aa).

The segment covering 1-14 has biased composition (basic and acidic residues); that stretch reads MALTEDKSDSDGRR. Positions 1–45 are disordered; sequence MALTEDKSDSDGRRWGKFKLPFRNSNSQAPSASSSSSMATSSSSV. Positions 25 to 45 are enriched in low complexity; the sequence is SNSQAPSASSSSSMATSSSSV. The MSP domain maps to 99–221; it reads RLKLDPSAKL…EEQVMRVVFL (123 aa).

This sequence belongs to the VAMP-associated protein (VAP) (TC 9.B.17) family.

Functionally, may play a role in vesicle trafficking. This Arabidopsis thaliana (Mouse-ear cress) protein is Vesicle-associated protein 4-3 (PVA43).